Here is a 235-residue protein sequence, read N- to C-terminus: Exosome complex component Rrp4 (235 aa).

The 73-residue stretch at 67 to 139 (GDVVIGLIQS…KTRSPLLTVQ (73 aa)) folds into the S1 motif domain. Residues 149 to 205 (GKIVEISPAKVPRVIGRKMSMLKTLEEKTECKIFVARNGRIHLECPNEDLEAIAVMA) form the KH domain.

It belongs to the RRP4 family. Component of the archaeal exosome complex. Forms a trimer of Rrp4 and/or Csl4 subunits. The trimer associates with a hexameric ring-like arrangement composed of 3 Rrp41-Rrp42 heterodimers.

The protein resides in the cytoplasm. In terms of biological role, non-catalytic component of the exosome, which is a complex involved in RNA degradation. Increases the RNA binding and the efficiency of RNA degradation. Confers strong poly(A) specificity to the exosome. The protein is Exosome complex component Rrp4 of Aeropyrum pernix (strain ATCC 700893 / DSM 11879 / JCM 9820 / NBRC 100138 / K1).